Reading from the N-terminus, the 477-residue chain is Aspartyl/glutamyl-tRNA(Asn/Gln) amidotransferase subunit B (477 aa).

This sequence belongs to the GatB/GatE family. GatB subfamily. In terms of assembly, heterotrimer of A, B and C subunits.

The enzyme catalyses L-glutamyl-tRNA(Gln) + L-glutamine + ATP + H2O = L-glutaminyl-tRNA(Gln) + L-glutamate + ADP + phosphate + H(+). The catalysed reaction is L-aspartyl-tRNA(Asn) + L-glutamine + ATP + H2O = L-asparaginyl-tRNA(Asn) + L-glutamate + ADP + phosphate + 2 H(+). In terms of biological role, allows the formation of correctly charged Asn-tRNA(Asn) or Gln-tRNA(Gln) through the transamidation of misacylated Asp-tRNA(Asn) or Glu-tRNA(Gln) in organisms which lack either or both of asparaginyl-tRNA or glutaminyl-tRNA synthetases. The reaction takes place in the presence of glutamine and ATP through an activated phospho-Asp-tRNA(Asn) or phospho-Glu-tRNA(Gln). This is Aspartyl/glutamyl-tRNA(Asn/Gln) amidotransferase subunit B from Coxiella burnetii (strain CbuK_Q154) (Coxiella burnetii (strain Q154)).